Reading from the N-terminus, the 167-residue chain is Protein-export protein SecB (167 aa).

It belongs to the SecB family. Homotetramer, a dimer of dimers. One homotetramer interacts with 1 SecA dimer.

The protein localises to the cytoplasm. One of the proteins required for the normal export of preproteins out of the cell cytoplasm. It is a molecular chaperone that binds to a subset of precursor proteins, maintaining them in a translocation-competent state. It also specifically binds to its receptor SecA. This is Protein-export protein SecB from Idiomarina loihiensis (strain ATCC BAA-735 / DSM 15497 / L2-TR).